A 260-amino-acid chain; its full sequence is 3'-5' ssDNA/RNA exonuclease TatD (260 aa).

A divalent metal cation-binding residues include Glu-92, His-128, and His-153.

It belongs to the metallo-dependent hydrolases superfamily. TatD-type hydrolase family. TatD subfamily. Monomer. It depends on Mg(2+) as a cofactor.

The protein resides in the cytoplasm. Its function is as follows. 3'-5' exonuclease that prefers single-stranded DNA and RNA. May play a role in the H(2)O(2)-induced DNA damage repair. This Pectobacterium atrosepticum (strain SCRI 1043 / ATCC BAA-672) (Erwinia carotovora subsp. atroseptica) protein is 3'-5' ssDNA/RNA exonuclease TatD.